A 362-amino-acid chain; its full sequence is UDP-N-acetylglucosamine--N-acetylmuramyl-(pentapeptide) pyrophosphoryl-undecaprenol N-acetylglucosamine transferase (362 aa).

Residues 14–16 (TGG), Asn-122, Arg-163, Ser-190, and Gln-285 each bind UDP-N-acetyl-alpha-D-glucosamine.

This sequence belongs to the glycosyltransferase 28 family. MurG subfamily.

It is found in the cell inner membrane. It catalyses the reaction di-trans,octa-cis-undecaprenyl diphospho-N-acetyl-alpha-D-muramoyl-L-alanyl-D-glutamyl-meso-2,6-diaminopimeloyl-D-alanyl-D-alanine + UDP-N-acetyl-alpha-D-glucosamine = di-trans,octa-cis-undecaprenyl diphospho-[N-acetyl-alpha-D-glucosaminyl-(1-&gt;4)]-N-acetyl-alpha-D-muramoyl-L-alanyl-D-glutamyl-meso-2,6-diaminopimeloyl-D-alanyl-D-alanine + UDP + H(+). Its pathway is cell wall biogenesis; peptidoglycan biosynthesis. In terms of biological role, cell wall formation. Catalyzes the transfer of a GlcNAc subunit on undecaprenyl-pyrophosphoryl-MurNAc-pentapeptide (lipid intermediate I) to form undecaprenyl-pyrophosphoryl-MurNAc-(pentapeptide)GlcNAc (lipid intermediate II). This chain is UDP-N-acetylglucosamine--N-acetylmuramyl-(pentapeptide) pyrophosphoryl-undecaprenol N-acetylglucosamine transferase, found in Prochlorococcus marinus (strain MIT 9215).